Here is a 224-residue protein sequence, read N- to C-terminus: N-(5'-phosphoribosyl)anthranilate isomerase (224 aa).

Belongs to the TrpF family.

It catalyses the reaction N-(5-phospho-beta-D-ribosyl)anthranilate = 1-(2-carboxyphenylamino)-1-deoxy-D-ribulose 5-phosphate. It functions in the pathway amino-acid biosynthesis; L-tryptophan biosynthesis; L-tryptophan from chorismate: step 3/5. This chain is N-(5'-phosphoribosyl)anthranilate isomerase, found in Sinorhizobium fredii (strain NBRC 101917 / NGR234).